Here is a 242-residue protein sequence, read N- to C-terminus: Type III pantothenate kinase (242 aa).

Residue 7–14 (DLGNSRFK) participates in ATP binding. Substrate is bound by residues Tyr91 and 98–101 (GVDR). The Proton acceptor role is filled by Asp100. Position 121 (Thr121) interacts with ATP. Thr171 lines the substrate pocket.

The protein belongs to the type III pantothenate kinase family. In terms of assembly, homodimer. It depends on NH4(+) as a cofactor. Requires K(+) as cofactor.

It is found in the cytoplasm. It carries out the reaction (R)-pantothenate + ATP = (R)-4'-phosphopantothenate + ADP + H(+). It functions in the pathway cofactor biosynthesis; coenzyme A biosynthesis; CoA from (R)-pantothenate: step 1/5. Catalyzes the phosphorylation of pantothenate (Pan), the first step in CoA biosynthesis. This Xanthomonas axonopodis pv. citri (strain 306) protein is Type III pantothenate kinase.